We begin with the raw amino-acid sequence, 220 residues long: Pyridoxine/pyridoxamine 5'-phosphate oxidase (220 aa).

Substrate contacts are provided by residues 8 to 11 (RKSY) and Lys-66. Residues 61 to 66 (RVVLIK), 76 to 77 (FT), Arg-82, and Lys-83 contribute to the FMN site. Substrate contacts are provided by Tyr-123, Arg-127, and Ser-131. Residues 140 to 141 (QS) and Trp-184 contribute to the FMN site. 190–192 (RLH) serves as a coordination point for substrate. Arg-194 provides a ligand contact to FMN.

It belongs to the pyridoxamine 5'-phosphate oxidase family. Homodimer. FMN serves as cofactor.

It catalyses the reaction pyridoxamine 5'-phosphate + O2 + H2O = pyridoxal 5'-phosphate + H2O2 + NH4(+). It carries out the reaction pyridoxine 5'-phosphate + O2 = pyridoxal 5'-phosphate + H2O2. The protein operates within cofactor metabolism; pyridoxal 5'-phosphate salvage; pyridoxal 5'-phosphate from pyridoxamine 5'-phosphate: step 1/1. It participates in cofactor metabolism; pyridoxal 5'-phosphate salvage; pyridoxal 5'-phosphate from pyridoxine 5'-phosphate: step 1/1. Functionally, catalyzes the oxidation of either pyridoxine 5'-phosphate (PNP) or pyridoxamine 5'-phosphate (PMP) into pyridoxal 5'-phosphate (PLP). The sequence is that of Pyridoxine/pyridoxamine 5'-phosphate oxidase from Albidiferax ferrireducens (strain ATCC BAA-621 / DSM 15236 / T118) (Rhodoferax ferrireducens).